A 476-amino-acid chain; its full sequence is Bifunctional protein HldE (476 aa).

A ribokinase region spans residues 1 to 319; it reads MKVTLPAFEK…EALKSHQGES (319 aa). 195–198 is an ATP binding site; the sequence is NMSE. The active site involves Asp-264. The tract at residues 345 to 476 is cytidylyltransferase; sequence MTNGCFDILH…AIIQNIMSRH (132 aa).

This sequence in the N-terminal section; belongs to the carbohydrate kinase PfkB family. It in the C-terminal section; belongs to the cytidylyltransferase family. Homodimer.

The catalysed reaction is D-glycero-beta-D-manno-heptose 7-phosphate + ATP = D-glycero-beta-D-manno-heptose 1,7-bisphosphate + ADP + H(+). It catalyses the reaction D-glycero-beta-D-manno-heptose 1-phosphate + ATP + H(+) = ADP-D-glycero-beta-D-manno-heptose + diphosphate. It participates in nucleotide-sugar biosynthesis; ADP-L-glycero-beta-D-manno-heptose biosynthesis; ADP-L-glycero-beta-D-manno-heptose from D-glycero-beta-D-manno-heptose 7-phosphate: step 1/4. The protein operates within nucleotide-sugar biosynthesis; ADP-L-glycero-beta-D-manno-heptose biosynthesis; ADP-L-glycero-beta-D-manno-heptose from D-glycero-beta-D-manno-heptose 7-phosphate: step 3/4. Its function is as follows. Catalyzes the phosphorylation of D-glycero-D-manno-heptose 7-phosphate at the C-1 position to selectively form D-glycero-beta-D-manno-heptose-1,7-bisphosphate. In terms of biological role, catalyzes the ADP transfer from ATP to D-glycero-beta-D-manno-heptose 1-phosphate, yielding ADP-D-glycero-beta-D-manno-heptose. The chain is Bifunctional protein HldE from Shewanella amazonensis (strain ATCC BAA-1098 / SB2B).